We begin with the raw amino-acid sequence, 684 residues long: MENLQTNFSLVQGSTKKLNGMGDDGSPPAKKMITDIHANGKTINKVPTVKKEHLDDYGEAPVETDGEHVKRTCTSVPETLHLNPSLKHTLAQFHLSSQSSLGGPAAFSARHSQESMSPTVFLPLPSPQVLPGPLLIPSDSSTELTQTVLEGESISCFQVGGEKRLCLPQVLNSVLREFTLQQINTVCDELYIYCSRCTSDQLHILKVLGILPFNAPSCGLITLTDAQRLCNALLRPRTFPQNGSVLPAKSSLAQLKETGSAFEVEHECLGKCQGLFAPQFYVQPDAPCIQCLECCGMFAPQTFVMHSHRSPDKRTCHWGFESAKWHCYLHVNQKYLGTPEEKKLKIILEEMKEKFSMRSGKRNQSKTDAPSGMELQSWYPVIKQEGDHVSQTHSFLHPSYYLYMCDKVVAPNVSLTSAVSQSKELTKTEASKSISRQSEKAHSSGKLQKTVSYPDVSLEEQEKMDLKTSRELCSRLDASISNNSTSKRKSESATCNLVRDINKVGIGLVAAASSPLLVKDVICEDDKGKIMEEVMRTYLKQQEKLNLILQKKQQLQMEVKMLSSSKSMKELTEEQQNLQKELESLQNEHAQRMEEFYVEQKDLEKKLEQIMKQKCTCDSNLEKDKEAEYAGQLAELRQRLDHAEADRQELQDELRQEREARQKLEMMIKELKLQILKSSKTAKE.

Residues Lys-50 and Lys-70 each participate in a glycyl lysine isopeptide (Lys-Gly) (interchain with G-Cter in SUMO2) cross-link. The disordered stretch occupies residues 420-454 (SQSKELTKTEASKSISRQSEKAHSSGKLQKTVSYP). At Ser-452 the chain carries Phosphoserine. Glycyl lysine isopeptide (Lys-Gly) (interchain with G-Cter in SUMO2) cross-links involve residues Lys-489 and Lys-527. A coiled-coil region spans residues 536-684 (RTYLKQQEKL…ILKSSKTAKE (149 aa)).

This sequence belongs to the SKI family. As to quaternary structure, interacts with CPNE4 (via VWFA domain). Interacts with SMAD2, SMAD3 and RNF111. Isoform 1 interacts with WWP1. In terms of processing, ubiquitinated by RNF111 and ARK2C, promoting proteasomal degradation, leading to enhance the BMP-Smad signaling. As to expression, isoform SNON and isoform SNOA are widely expressed. Highest expression is found in skeletal muscle, followed by placenta and lung. Lowest expression in heart, brain and pancreas. Isoform SNOI expression is restricted to skeletal muscle.

In terms of biological role, may have regulatory role in cell division or differentiation in response to extracellular signals. This chain is Ski-like protein (SKIL), found in Homo sapiens (Human).